The chain runs to 607 residues: Glutamine--fructose-6-phosphate aminotransferase [isomerizing] (607 aa).

Cys2 acts as the Nucleophile; for GATase activity in catalysis. A Glutamine amidotransferase type-2 domain is found at 2-217; sequence CGIIGIIGND…DGDWAVLTRN (216 aa). 2 consecutive SIS domains span residues 283 to 422 and 455 to 597; these read IGID…ARGA and VCHD…VDQP. Lys602 serves as the catalytic For Fru-6P isomerization activity.

In terms of assembly, homodimer.

The protein resides in the cytoplasm. It catalyses the reaction D-fructose 6-phosphate + L-glutamine = D-glucosamine 6-phosphate + L-glutamate. In terms of biological role, catalyzes the first step in hexosamine metabolism, converting fructose-6P into glucosamine-6P using glutamine as a nitrogen source. The polypeptide is Glutamine--fructose-6-phosphate aminotransferase [isomerizing] (Brucella suis biovar 1 (strain 1330)).